A 311-amino-acid chain; its full sequence is MKLVFCGTPAFAVPTLEALLQAGHDVALVVTQPDRPSGRGMQVLAPPVKQTALAAGLPVVQPEKIKNNLEFRAQLEAIAPDAIIVVAYGRIIPKWMLDLPRYGNLNLHASLLPKYRGAAPIQWAVAMGETVTGATTMRIDEGLDTGDMLLQDEMEIPPAMTAEELFPLLAEMGAPLMVETLAGLEQGTVTPQKQDEAQATLAPILTREDGRVDFARSAAEIYNRWRGFQPWPGAWTMLGGKKLTLHRMLLAEREDRAEPGMVRVHAGRLFFACGDGGWLEIAELQLEGKKRMPVTDFLRGNTLAPETRLGA.

S110–P113 contributes to the (6S)-5,6,7,8-tetrahydrofolate binding site.

Belongs to the Fmt family.

The catalysed reaction is L-methionyl-tRNA(fMet) + (6R)-10-formyltetrahydrofolate = N-formyl-L-methionyl-tRNA(fMet) + (6S)-5,6,7,8-tetrahydrofolate + H(+). Functionally, attaches a formyl group to the free amino group of methionyl-tRNA(fMet). The formyl group appears to play a dual role in the initiator identity of N-formylmethionyl-tRNA by promoting its recognition by IF2 and preventing the misappropriation of this tRNA by the elongation apparatus. The protein is Methionyl-tRNA formyltransferase of Acidobacterium capsulatum (strain ATCC 51196 / DSM 11244 / BCRC 80197 / JCM 7670 / NBRC 15755 / NCIMB 13165 / 161).